A 446-amino-acid polypeptide reads, in one-letter code: Glucose-6-phosphate isomerase (446 aa).

E287 functions as the Proton donor in the catalytic mechanism. Catalysis depends on residues H308 and K422.

It belongs to the GPI family.

It is found in the cytoplasm. The catalysed reaction is alpha-D-glucose 6-phosphate = beta-D-fructose 6-phosphate. It functions in the pathway carbohydrate biosynthesis; gluconeogenesis. It participates in carbohydrate degradation; glycolysis; D-glyceraldehyde 3-phosphate and glycerone phosphate from D-glucose: step 2/4. Catalyzes the reversible isomerization of glucose-6-phosphate to fructose-6-phosphate. The polypeptide is Glucose-6-phosphate isomerase (Lactobacillus helveticus (strain DPC 4571)).